Consider the following 74-residue polypeptide: Protein SMIM7 homolog (74 aa).

The helical transmembrane segment at 53-73 (FRAFIGLWNIFIMFLMLVFFG) threads the bilayer.

The protein belongs to the SMIM7 family.

Its subcellular location is the membrane. The chain is Protein SMIM7 homolog from Ixodes scapularis (Black-legged tick).